We begin with the raw amino-acid sequence, 353 residues long: Melanin-concentrating hormone receptor 1 (353 aa).

The tract at residues 1–28 (MDLEASLLPTGPNASNTSDGPDNLTSAG) is disordered. Residues 1–45 (MDLEASLLPTGPNASNTSDGPDNLTSAGPPPRTGSISYVNIIMPS) lie on the Extracellular side of the membrane. Residues 12–26 (PNASNTSDGPDNLTS) show a composition bias toward polar residues. 3 N-linked (GlcNAc...) asparagine glycosylation sites follow: asparagine 13, asparagine 16, and asparagine 23. The helical transmembrane segment at 46 to 66 (VFGTICLLGIIGNSMVIFAVV) threads the bilayer. Over 67–79 (KKSKLHWFSNVPD) the chain is Cytoplasmic. A helical membrane pass occupies residues 80–100 (IFIINLSVVDLLFLLGMPFMI). The Extracellular portion of the chain corresponds to 101–116 (HQLMGNGVWHFGETMC). A disulfide bridge connects residues cysteine 116 and cysteine 194. A helical membrane pass occupies residues 117–139 (TLITAMDANSQFTSTYILTAMAI). The Cytoplasmic portion of the chain corresponds to 140–161 (DRYLATVHPISSTRFRKPSVAT). The helical transmembrane segment at 162–182 (LVICLLWALSIISITPVWLYA) threads the bilayer. The Extracellular segment spans residues 183–204 (RLIPFPGGTVGCGIRLPNPDTD). A helical membrane pass occupies residues 205 to 225 (LYWFTLYQFFLAFALPFVVIT). The Cytoplasmic segment spans residues 226–256 (AAYVRILQRMTSSVAPASQRSIRLRTKRVTR). The helical transmembrane segment at 257-277 (TAIAICLVFFVCWAPYYVLQL) threads the bilayer. At 278 to 294 (TQLSISRPTLTFVYLYN) the chain is on the extracellular side. The chain crosses the membrane as a helical span at residues 295–315 (AAISLGYANSCLNPFVYIVLC). Residues 316-353 (ETFRKRLVLSVKPAAQGQLRAVSNAQTAEEERTESKGT) lie on the Cytoplasmic side of the membrane.

Belongs to the G-protein coupled receptor 1 family. Interacts with NCDN.

It is found in the cell membrane. Receptor for melanin-concentrating hormone, coupled to both G proteins that inhibit adenylyl cyclase and G proteins that activate phosphoinositide hydrolysis. The polypeptide is Melanin-concentrating hormone receptor 1 (Sus scrofa (Pig)).